The chain runs to 372 residues: Alanine dehydrogenase 1 (372 aa).

His-94 is an active-site residue. Position 170–200 (170–200) interacts with NAD(+); the sequence is TYVIFGGGVAATNAANVALGLNAKVIIIELN.

It belongs to the AlaDH/PNT family.

The catalysed reaction is L-alanine + NAD(+) + H2O = pyruvate + NH4(+) + NADH + H(+). The protein operates within amino-acid degradation; L-alanine degradation via dehydrogenase pathway; NH(3) and pyruvate from L-alanine: step 1/1. May play a role in cell wall synthesis as L-alanine is an important constituent of the peptidoglycan layer. The protein is Alanine dehydrogenase 1 (ald1) of Staphylococcus aureus (strain USA300).